The following is a 1001-amino-acid chain: Serine/threonine-protein kinase TAO1 (1001 aa).

Position 9 is a phosphoserine (Ser-9). The Protein kinase domain maps to 28 to 281 (FTDLREIGHG…SEELLKHMFV (254 aa)). ATP contacts are provided by residues 34 to 42 (IGHGSFGAV) and Lys-57. Asp-151 functions as the Proton acceptor in the catalytic mechanism. 2 disordered regions span residues 324–380 (PAVE…DKSE) and 404–431 (ENYQEEGDPRTRASAPQSPPQVSRHKSH). Over residues 350 to 370 (SNQSIPSMSISASSQSSSVNS) the composition is skewed to low complexity. Phosphoserine is present on residues Ser-421 and Ser-445. Residues 458 to 651 (SELREQMSGY…QTQKDLEHAM (194 aa)) are a coiled coil. Positions 567–587 (KEELNENQSTPKKEKQEWLSK) are disordered. Basic and acidic residues predominate over residues 577 to 587 (PKKEKQEWLSK). A Phosphothreonine modification is found at Thr-669. A coiled-coil region spans residues 754–877 (KAVLKRLKEE…LERQAREIEA (124 aa)). The disordered stretch occupies residues 905–1001 (PGASSWSHNP…ISNGSHMSYT (97 aa)). The span at 906-915 (GASSWSHNPT) shows a compositional bias: polar residues. Residue Ser-965 is modified to Phosphoserine. Polar residues predominate over residues 975-1001 (GGRTEQGMSRSTSVTSQISNGSHMSYT).

This sequence belongs to the protein kinase superfamily. STE Ser/Thr protein kinase family. STE20 subfamily. Self-associates. Interacts with MAP2K3. Interacts with SPRED1. Interacts with TESK1; the interaction inhibits TAOK1 kinase activity. Interacts with MAP3K7. In terms of processing, proteolytically processed by caspase-3 (CASP3). Autophosphorylated. Phosphorylated by ATM in response to DNA damage. Phosphorylated by LRRK2.

It localises to the cytoplasm. The enzyme catalyses L-seryl-[protein] + ATP = O-phospho-L-seryl-[protein] + ADP + H(+). It carries out the reaction L-threonyl-[protein] + ATP = O-phospho-L-threonyl-[protein] + ADP + H(+). Serine/threonine-protein kinase activity is inhibited by SPRED1. In terms of biological role, serine/threonine-protein kinase involved in various processes such as p38/MAPK14 stress-activated MAPK cascade, DNA damage response and regulation of cytoskeleton stability. Phosphorylates MAP2K3, MAP2K6 and MARK2. Acts as an activator of the p38/MAPK14 stress-activated MAPK cascade by mediating phosphorylation and subsequent activation of the upstream MAP2K3 and MAP2K6 kinases. Involved in G-protein coupled receptor signaling to p38/MAPK14. In response to DNA damage, involved in the G2/M transition DNA damage checkpoint by activating the p38/MAPK14 stress-activated MAPK cascade, probably by mediating phosphorylation of MAP2K3 and MAP2K6. Acts as a regulator of cytoskeleton stability by phosphorylating 'Thr-208' of MARK2, leading to activate MARK2 kinase activity and subsequent phosphorylation and detachment of MAPT/TAU from microtubules. Also acts as a regulator of apoptosis: regulates apoptotic morphological changes, including cell contraction, membrane blebbing and apoptotic bodies formation via activation of the MAPK8/JNK cascade. During fetal development, it plays an essential role in the regulation of neuronal differentiation and migration to the cortical plate. The polypeptide is Serine/threonine-protein kinase TAO1 (Taok1) (Rattus norvegicus (Rat)).